The following is a 1263-amino-acid chain: DNA-directed RNA polymerase subunit beta (1263 aa).

Belongs to the RNA polymerase beta chain family. As to quaternary structure, the RNAP catalytic core consists of 2 alpha, 1 beta, 1 beta' and 1 omega subunit. When a sigma factor is associated with the core the holoenzyme is formed, which can initiate transcription.

It catalyses the reaction RNA(n) + a ribonucleoside 5'-triphosphate = RNA(n+1) + diphosphate. Its function is as follows. DNA-dependent RNA polymerase catalyzes the transcription of DNA into RNA using the four ribonucleoside triphosphates as substrates. The chain is DNA-directed RNA polymerase subunit beta from Thermotoga maritima (strain ATCC 43589 / DSM 3109 / JCM 10099 / NBRC 100826 / MSB8).